The sequence spans 128 residues: Probable cystatin-15 (128 aa).

Residues 1–20 (MFWKLPLLLGLLALGPHVCS) form the signal peptide. Cysteine 82 and cysteine 92 form a disulfide bridge. An N-linked (GlcNAc...) asparagine glycan is attached at asparagine 104. The cysteines at positions 105 and 125 are disulfide-linked.

Belongs to the cystatin family.

The protein resides in the secreted. The sequence is that of Probable cystatin-15 from Bos taurus (Bovine).